Consider the following 279-residue polypeptide: Large ribosomal subunit protein uL2 (279 aa).

Disordered regions lie at residues 29 to 59 (PEKS…GGHK) and 224 to 279 (VAMN…KNKR). Residues 50 to 59 (TTRHKGGGHK) are compositionally biased toward basic residues. The span at 253-268 (PEGRTRRPNKESDKLI) shows a compositional bias: basic and acidic residues. The segment covering 269–279 (VRRRRTGKNKR) has biased composition (basic residues).

This sequence belongs to the universal ribosomal protein uL2 family. As to quaternary structure, part of the 50S ribosomal subunit. Forms a bridge to the 30S subunit in the 70S ribosome.

Its function is as follows. One of the primary rRNA binding proteins. Required for association of the 30S and 50S subunits to form the 70S ribosome, for tRNA binding and peptide bond formation. It has been suggested to have peptidyltransferase activity; this is somewhat controversial. Makes several contacts with the 16S rRNA in the 70S ribosome. The sequence is that of Large ribosomal subunit protein uL2 from Paenarthrobacter aurescens (strain TC1).